Consider the following 365-residue polypeptide: AP2/ERF and B3 domain-containing protein Os01g0141000 (365 aa).

The interval 1–24 (MGVVSFSSTSSGASTATTESGGAV) is disordered. Positions 68-123 (RYKGVVPQPNGRWGAQIYERHARVWLGTFPDEEAAARAYDVAALRYRGRDAATNFP) form a DNA-binding region, AP2/ERF. Residues 182 to 294 (FEKAVTPSDV…KLLFIDCKKN (113 aa)) constitute a DNA-binding region (TF-B3).

Its subcellular location is the nucleus. This is AP2/ERF and B3 domain-containing protein Os01g0141000 from Oryza sativa subsp. japonica (Rice).